The primary structure comprises 365 residues: MADTEVEMQVSAADTNNNENGQAQSNYEYDVNVQDEEDEAAAGPMPLQMLEGNGITASDIKKIHEAGYYTVESIAYTPKRQLLLIKGISEAKADKLLGEASKLVPMGFTTATEYHIRRSELITITTGSKQLDTLLQGGVETGSITELFGEFRTGKSQICHTLAVTCQLPIDMGGGEGKCLYIDTEGTFRPVRLLAVADRYGLNGEEVLDNVAYARAYNADHQLELLQQAANMMSESRFSLLVVDSCTALYRTDFSGRGELSARQMHLARFMRTLQRLADEFGIAVVITNQVVAQVDGISFNPDPKKPIGGNILAHSSTTRLSLRKGRGEQRICKIYDSPCLPESEAIFAINSDGVGDPKEIIAPV.

Residues 1-25 (MADTEVEMQVSAADTNNNENGQAQS) form a disordered region. Residues 12–25 (AADTNNNENGQAQS) show a composition bias toward polar residues. ATP is bound at residue 149–156 (GEFRTGKS).

Belongs to the RecA family. RAD51 subfamily. In terms of assembly, interacts with rad22, rad54, rdh54, rhp54, rti1, swi2 and swi5. Forms homooiligomers.

The protein localises to the nucleus. Functionally, required both for recombination and for the repair of DNA damage caused by X-rays. Binds to single and double-stranded DNA, in the presence of magnesium, and exhibits DNA-dependent ATPase activity. Promotes DNA strand annealing and strand exchange via DNA recombinase activity and forms helical nucleoprotein filaments. The chain is DNA repair protein rhp51 (rhp51) from Schizosaccharomyces pombe (strain 972 / ATCC 24843) (Fission yeast).